Consider the following 65-residue polypeptide: DNA-directed RNA polymerase subunit omega (65 aa).

It belongs to the RNA polymerase subunit omega family. As to quaternary structure, the RNAP catalytic core consists of 2 alpha, 1 beta, 1 beta' and 1 omega subunit. When a sigma factor is associated with the core the holoenzyme is formed, which can initiate transcription.

The enzyme catalyses RNA(n) + a ribonucleoside 5'-triphosphate = RNA(n+1) + diphosphate. Promotes RNA polymerase assembly. Latches the N- and C-terminal regions of the beta' subunit thereby facilitating its interaction with the beta and alpha subunits. This is DNA-directed RNA polymerase subunit omega from Finegoldia magna (strain ATCC 29328 / DSM 20472 / WAL 2508) (Peptostreptococcus magnus).